The sequence spans 339 residues: Phenylalanine--tRNA ligase alpha subunit (339 aa).

E254 provides a ligand contact to Mg(2+).

This sequence belongs to the class-II aminoacyl-tRNA synthetase family. Phe-tRNA synthetase alpha subunit type 1 subfamily. As to quaternary structure, tetramer of two alpha and two beta subunits. Requires Mg(2+) as cofactor.

The protein resides in the cytoplasm. The catalysed reaction is tRNA(Phe) + L-phenylalanine + ATP = L-phenylalanyl-tRNA(Phe) + AMP + diphosphate + H(+). The sequence is that of Phenylalanine--tRNA ligase alpha subunit from Clostridium botulinum (strain Langeland / NCTC 10281 / Type F).